Consider the following 347-residue polypeptide: GMP reductase (347 aa).

108 to 131 (ADFQKTKDVMALSDELIFICIDIA) provides a ligand contact to NADP(+). The K(+) site is built by Gly181 and Gly183. Residue Cys186 is the Thioimidate intermediate of the active site. 216–239 (IIGDGGCTCPGDVAKAFGGGADFV) lines the NADP(+) pocket.

Belongs to the IMPDH/GMPR family. GuaC type 1 subfamily. Homotetramer.

The catalysed reaction is IMP + NH4(+) + NADP(+) = GMP + NADPH + 2 H(+). Its function is as follows. Catalyzes the irreversible NADPH-dependent deamination of GMP to IMP. It functions in the conversion of nucleobase, nucleoside and nucleotide derivatives of G to A nucleotides, and in maintaining the intracellular balance of A and G nucleotides. This chain is GMP reductase, found in Vibrio cholerae serotype O1 (strain ATCC 39541 / Classical Ogawa 395 / O395).